An 857-amino-acid chain; its full sequence is DNA gyrase subunit A (857 aa).

Residues leucine 39–leucine 507 form the Topo IIA-type catalytic domain. Catalysis depends on tyrosine 127, which acts as the O-(5'-phospho-DNA)-tyrosine intermediate. Positions glutamine 534 to glycine 540 match the GyrA-box motif. The disordered stretch occupies residues arginine 825–glutamate 857. A compositionally biased stretch (acidic residues) spans glutamate 828–alanine 840.

It belongs to the type II topoisomerase GyrA/ParC subunit family. As to quaternary structure, heterotetramer, composed of two GyrA and two GyrB chains. In the heterotetramer, GyrA contains the active site tyrosine that forms a transient covalent intermediate with DNA, while GyrB binds cofactors and catalyzes ATP hydrolysis.

It is found in the cytoplasm. The catalysed reaction is ATP-dependent breakage, passage and rejoining of double-stranded DNA.. Its function is as follows. A type II topoisomerase that negatively supercoils closed circular double-stranded (ds) DNA in an ATP-dependent manner to modulate DNA topology and maintain chromosomes in an underwound state. Negative supercoiling favors strand separation, and DNA replication, transcription, recombination and repair, all of which involve strand separation. Also able to catalyze the interconversion of other topological isomers of dsDNA rings, including catenanes and knotted rings. Type II topoisomerases break and join 2 DNA strands simultaneously in an ATP-dependent manner. This chain is DNA gyrase subunit A, found in Streptomyces coelicolor (strain ATCC BAA-471 / A3(2) / M145).